We begin with the raw amino-acid sequence, 72 residues long: MIIPWQDLDPETLDNLIESFVLREGTDYGEYERSLADKVADVKQQLKRGEAVLVWSELHETVNIMPRALFNG.

It belongs to the UPF0270 family.

This chain is UPF0270 protein KPN78578_37030, found in Klebsiella pneumoniae subsp. pneumoniae (strain ATCC 700721 / MGH 78578).